A 324-amino-acid polypeptide reads, in one-letter code: ATP synthase mitochondrial F1 complex assembly factor 1 (324 aa).

A mitochondrion-targeting transit peptide spans 1-54 (MAAVVSAAGGACPAVLQVAGLYRGLCAVRSRALGLGFVSPAQLRVFPVRRGSGL).

This sequence belongs to the ATP11 family. As to quaternary structure, interacts with ATP5F1B; involved in the assembly of the F1 component of the mitochondrial ATP synthase (ATPase). In terms of tissue distribution, widely expressed but with low level.

It is found in the mitochondrion inner membrane. Its function is as follows. Has a complex stabilizing activity in the assembly of the mitochondrial F1-F0 complex. This is ATP synthase mitochondrial F1 complex assembly factor 1 from Mus musculus (Mouse).